Reading from the N-terminus, the 358-residue chain is Protein FAM187B (358 aa).

An N-terminal signal peptide occupies residues 1–17 (MLATLWLVGLSLPMLWA). Residues 18–322 (QRLISCPYKN…DKADSVLRRL (305 aa)) are Extracellular-facing. The N-linked (GlcNAc...) asparagine glycan is linked to N127. Residues 323 to 343 (KLMVLSISVLAVGGLLCKVVF) traverse the membrane as a helical segment. At 344–358 (RPVCGKKRSQVLLVK) the chain is on the cytoplasmic side.

This sequence belongs to the FAM187 family.

Its subcellular location is the membrane. The polypeptide is Protein FAM187B (Fam187b) (Mus musculus (Mouse)).